A 323-amino-acid polypeptide reads, in one-letter code: D-alanine--D-alanine ligase (323 aa).

In terms of domain architecture, ATP-grasp spans 105–305 (KQQLVPRGIP…YEDLVEAIVE (201 aa)). ATP is bound at residue 131 to 188 (PLARPYVLKPVNEGSSVGVAIVTDESNYGNPIRRDAPGPWQEFRELLAEPFIRGRELT). The Mg(2+) site is built by D256, E272, and N274.

This sequence belongs to the D-alanine--D-alanine ligase family. The cofactor is Mg(2+). Mn(2+) serves as cofactor.

The protein resides in the cytoplasm. It carries out the reaction 2 D-alanine + ATP = D-alanyl-D-alanine + ADP + phosphate + H(+). It participates in cell wall biogenesis; peptidoglycan biosynthesis. Functionally, cell wall formation. This Erythrobacter litoralis (strain HTCC2594) protein is D-alanine--D-alanine ligase.